Consider the following 472-residue polypeptide: P2X purinoceptor 2 (472 aa).

The Cytoplasmic portion of the chain corresponds to 1–34; that stretch reads MVRRLARGCWSAFWDYETPKVIVVRNRRLGFVHR. 6 disulfide bridges follow: cysteine 9–cysteine 430, cysteine 113–cysteine 164, cysteine 124–cysteine 147, cysteine 130–cysteine 158, cysteine 214–cysteine 224, and cysteine 258–cysteine 267. Residues 35–52 form a helical membrane-spanning segment; it reads MVQLLILLYFVWYVFIVQ. At 53–326 the chain is on the extracellular side; it reads KSYQDSETGP…IVHGQAGKFS (274 aa). ATP-binding residues include lysine 69 and lysine 71. Residue asparagine 182 is glycosylated (N-linked (GlcNAc...) asparagine). Residue threonine 184 coordinates ATP. Asparagine 239 carries N-linked (GlcNAc...) asparagine glycosylation. Serine 284, asparagine 288, and arginine 290 together coordinate ATP. Asparagine 298 is a glycosylation site (N-linked (GlcNAc...) asparagine). Lysine 308 lines the ATP pocket. The pore-forming motif stretch occupies residues 309-322; it reads AYGIRIDVIVHGQA. A helical transmembrane segment spans residues 327–347; that stretch reads LIPTIINLATALTSIGVGSFL. Topologically, residues 348-472 are cytoplasmic; sequence CDWILLTFMN…STDPKGLAQL (125 aa). The disordered stretch occupies residues 393–472; it reads PPPSHYSQDQ…STDPKGLAQL (80 aa). The span at 456 to 465 shows a compositional bias: polar residues; that stretch reads PSQQDSTSTD.

Belongs to the P2X receptor family. Homotrimer and heterotrimer; functional P2XRs are organized as homomeric and heteromeric trimers. Homotrimer. Forms heterotrimer with P2RX1. Forms heterotrimer with P2RX6. Forms heterotrimer with P2RX3. In terms of tissue distribution, high levels in pituitary and vas deferens. Lower extent in spinal cord, bladder, brain, adrenal, testis, sensory epithelia from the inner ear.

The protein localises to the cell membrane. The enzyme catalyses Ca(2+)(in) = Ca(2+)(out). The catalysed reaction is K(+)(in) = K(+)(out). It carries out the reaction Na(+)(in) = Na(+)(out). Fast activation by external ATP. Exhibits slow desensitization during prolonged ATP activation. Not sensitive to the ATP agonist:alpha/beta-methylene-ATP. ATP-gated nonselective transmembrane cation channel permeable to potassium, sodium and calcium. Activation by extracellular ATP induces a variety of cellular responses, such as excitatory postsynaptic responses in sensory neurons, neuromuscular junctions (NMJ) formation, hearing, perception of taste and peristalsis. In the inner ear, regulates sound transduction and auditory neurotransmission, outer hair cell electromotility, inner ear gap junctions, and K(+) recycling. Mediates synaptic transmission between neurons and from neurons to smooth muscle. This Rattus norvegicus (Rat) protein is P2X purinoceptor 2 (P2rx2).